Reading from the N-terminus, the 414-residue chain is MEQPSPVTRQSFDEWIVPTYAPADFIVVRGEGSTLWDQQGKSYIDFAGGIAVNALGHGHPAVRAALIEQADKVWHLGNGYTNEPVLRLAKQLIDATFAEKVFFCNSGAEANEAALKLARKYALDNFANKAGQQGEKNQIVAFRNAFHGRTLFTVSAGGQPKYSQDFAPLPGGIHHGIFNDLASAEHLITDQTCAVIVEPIQGEGGVLPADKEFLHGLRALCDRHNALLIFDEIQTGVGRTGELYAYMHYGVSPDVLTSAKALGGGFPIGAMLTTTKYASALSVGSHGTTFGGNPLACAVAGTVLSLINQPTLLAGVKARHQWFIDELAEINARHNVFAEIRGRGLLIGCVLNAQYAGKSKEIVQAAAQYGLIALIAGPDVVRFAPSLIISPKEIKEGLARLAMGIEQVCQKVTS.

At K260 the chain carries N6-(pyridoxal phosphate)lysine.

It belongs to the class-III pyridoxal-phosphate-dependent aminotransferase family. AstC subfamily. Requires pyridoxal 5'-phosphate as cofactor.

The enzyme catalyses N(2)-succinyl-L-ornithine + 2-oxoglutarate = N-succinyl-L-glutamate 5-semialdehyde + L-glutamate. It participates in amino-acid degradation; L-arginine degradation via AST pathway; L-glutamate and succinate from L-arginine: step 3/5. Catalyzes the transamination of N(2)-succinylornithine and alpha-ketoglutarate into N(2)-succinylglutamate semialdehyde and glutamate. Can also act as an acetylornithine aminotransferase. This Yersinia pestis bv. Antiqua (strain Antiqua) protein is Succinylornithine transaminase.